Consider the following 197-residue polypeptide: Probable molybdenum cofactor guanylyltransferase (197 aa).

GTP contacts are provided by residues 12–14 (LAG), K24, D71, and D103. Residue D103 participates in Mg(2+) binding.

It belongs to the MobA family. Requires Mg(2+) as cofactor.

It is found in the cytoplasm. The catalysed reaction is Mo-molybdopterin + GTP + H(+) = Mo-molybdopterin guanine dinucleotide + diphosphate. In terms of biological role, transfers a GMP moiety from GTP to Mo-molybdopterin (Mo-MPT) cofactor (Moco or molybdenum cofactor) to form Mo-molybdopterin guanine dinucleotide (Mo-MGD) cofactor. This Mycobacterium avium (strain 104) protein is Probable molybdenum cofactor guanylyltransferase.